The following is a 1116-amino-acid chain: Angiopoietin-1 receptor (1116 aa).

The N-terminal stretch at 1-21 (MCLLDSCTALLLLGCWMSGSA) is a signal peptide. Residues 22–745 (VRISDVTLVN…FAAHGHLLLY (724 aa)) lie on the Extracellular side of the membrane. A disulfide bridge links cysteine 46 with cysteine 106. Positions 46–126 (CVSSDWSSGG…YTYKMLQEAA (81 aa)) constitute an Ig-like C2-type 1 domain. N-linked (GlcNAc...) asparagine glycosylation is found at asparagine 110, asparagine 143, and asparagine 223. EGF-like domains lie at 214 to 256 (SCRA…HTCD), 258 to 302 (VCGE…LSCN), and 304 to 342 (ACPDGYYGAGCTQKCVCAKGRCDRFRGCVCAGRHGSRCE). 12 cysteine pairs are disulfide-bonded: cysteine 215–cysteine 224, cysteine 228–cysteine 237, cysteine 231–cysteine 244, cysteine 246–cysteine 255, cysteine 259–cysteine 268, cysteine 272–cysteine 277, cysteine 283–cysteine 290, cysteine 292–cysteine 301, cysteine 305–cysteine 314, cysteine 318–cysteine 325, cysteine 320–cysteine 331, and cysteine 333–cysteine 341. The Ig-like C2-type 2 domain maps to 348–438 (PVISHLRDVE…MQVEDEFTVE (91 aa)). Asparagine 367, asparagine 387, and asparagine 425 each carry an N-linked (GlcNAc...) asparagine glycan. A disulfide bond links cysteine 368 and cysteine 422. 3 Fibronectin type-III domains span residues 444–538 (RPQN…TQVL), 540–633 (LPVG…QLPP), and 634–729 (PPAN…TLPQ). 3 N-linked (GlcNAc...) asparagine glycosylation sites follow: asparagine 590, asparagine 637, and asparagine 642. A helical membrane pass occupies residues 746–766 (AILGSAGMTCCTVLLAFCIVL). Residues 767–1116 (QLKRNTLQRR…GIDCSAEEAG (350 aa)) lie on the Cytoplasmic side of the membrane. Residues 816-1095 (IQFQDVLGEG…RMLEERKTYV (280 aa)) enclose the Protein kinase domain. ATP contacts are provided by residues 822–830 (LGEGNFGQV) and lysine 847. Tyrosine 852 carries the post-translational modification Phosphotyrosine; by autocatalysis. Aspartate 956 acts as the Proton acceptor in catalysis. 3 positions are modified to phosphotyrosine; by autocatalysis: tyrosine 984, tyrosine 1094, and tyrosine 1100.

The protein belongs to the protein kinase superfamily. Tyr protein kinase family. Tie subfamily. As to quaternary structure, interacts with svep1. Autophosphorylated on tyrosine residues in response to ligand binding. Autophosphorylation occurs in trans, i.e. one subunit of the dimeric receptor phosphorylates tyrosine residues on the other subunit. Autophosphorylation occurs in a sequential manner, where Tyr-984 in the kinase activation loop is phosphorylated first, followed by autophosphorylation at additional tyrosine residues. Phosphorylation is important for interaction with scaffold proteins and effectors.

It localises to the cell membrane. The protein resides in the cell junction. Its subcellular location is the focal adhesion. The protein localises to the cytoplasm. It is found in the cytoskeleton. It carries out the reaction L-tyrosyl-[protein] + ATP = O-phospho-L-tyrosyl-[protein] + ADP + H(+). With respect to regulation, angiopoietin binding leads to receptor dimerization and activation by autophosphorylation at Tyr-984 on the kinase activation loop. In terms of biological role, tyrosine-protein kinase that acts as a cell-surface receptor for angiopoietins and regulates angiogenesis, endothelial cell survival, proliferation, migration, adhesion and cell spreading, reorganization of the actin cytoskeleton, but also maintenance of vascular quiescence. Can activate or inhibit angiogenesis, depending on the context. Angiopoietin signaling triggers receptor dimerization and autophosphorylation at specific tyrosine residues that then serve as binding sites for scaffold proteins and effectors. This Danio rerio (Zebrafish) protein is Angiopoietin-1 receptor.